A 118-amino-acid chain; its full sequence is Large ribosomal subunit protein bL17 (118 aa).

This sequence belongs to the bacterial ribosomal protein bL17 family. Part of the 50S ribosomal subunit. Contacts protein L32.

In Campylobacter fetus subsp. fetus (strain 82-40), this protein is Large ribosomal subunit protein bL17.